Reading from the N-terminus, the 82-residue chain is Small ribosomal subunit protein bS16 (82 aa).

The protein belongs to the bacterial ribosomal protein bS16 family.

This chain is Small ribosomal subunit protein bS16, found in Edwardsiella ictaluri (strain 93-146).